A 213-amino-acid polypeptide reads, in one-letter code: Putative manganese efflux pump MntP (213 aa).

The next 7 helical transmembrane spans lie at 6–26 (LGVLAVGLGADAFSMALGIGM), 34–54 (AFMLGLVVALFHIFMPWFGIL), 58–78 (ALGLVVGRLASFIGAAVLFFL), 107–127 (GSGGGAIVGAGAIVGGRLFAP), 132–152 (LVVIGAAVSMDALSVGFSLGT), 153–173 (VGAQLLPTVLTFGVVAGIMTV), and 192–212 (LAGGLILLGIGIKLLLGSASP).

Belongs to the MntP (TC 9.B.29) family.

Its subcellular location is the cell membrane. Probably functions as a manganese efflux pump. This is Putative manganese efflux pump MntP from Heliobacterium modesticaldum (strain ATCC 51547 / Ice1).